The primary structure comprises 397 residues: 2,6-dihydroxypyridine 3-monooxygenase (397 aa).

FAD-binding positions include 14-16, 35-36, Val49, Leu120, Asp306, and 316-320; these read SIS, ER, and AAGGA.

As to quaternary structure, homodimer. Requires FAD as cofactor.

The enzyme catalyses 2,6-dihydroxypyridine + NADH + O2 + H(+) = 2,3,6-trihydroxypyridine + NAD(+) + H2O. It functions in the pathway alkaloid degradation; nicotine degradation. Functionally, catalyzes the conversion of 2,6-dihydroxypyridine into 2,3,6-trihydroxypyridine in the nicotine degradation pathway. The sequence is that of 2,6-dihydroxypyridine 3-monooxygenase (dhpH) from Paenarthrobacter nicotinovorans (Arthrobacter nicotinovorans).